Reading from the N-terminus, the 2894-residue chain is uncharacterized protein (2894 aa).

Residues 8–28 (ISIFVFTILLLSNVSLGLNVS) form a helical membrane-spanning segment. PbH1 repeat units follow at residues 543–567 (EVRW…DISL), 2085–2107 (NYPL…SMLN), 2135–2156 (FGNI…VLYK), 2158–2180 (GNGI…YSKN), 2201–2223 (ISSI…LLEN), 2224–2244 (SSSS…YLKE), 2245–2266 (NYIS…EIVN), 2267–2289 (SSNV…AIFN), 2290–2311 (GENV…LSYG), 2341–2363 (LNNL…FIYS), 2367–2389 (ASNV…YIYG), 2390–2419 (VNAI…KISG), 2422–2444 (TKGV…SLEG), 2455–2477 (VENN…YIGG), 2479–2501 (VENV…LIQE), 2512–2542 (GTNI…TVGA), 2550–2582 (NGYI…EVYG), 2589–2611 (SLEF…LIGA), 2612–2633 (SKDI…TIPN), and 2638–2660 (PYNI…DLDD).

It is found in the membrane. This is an uncharacterized protein from Methanocaldococcus jannaschii (strain ATCC 43067 / DSM 2661 / JAL-1 / JCM 10045 / NBRC 100440) (Methanococcus jannaschii).